The sequence spans 447 residues: GTPase Der (447 aa).

EngA-type G domains follow at residues 3 to 167 (PVIA…HLAD) and 180 to 353 (IRLA…ASAN). Residues 9–16 (GRPNVGKS), 56–60 (DTGGF), 119–122 (NKAE), 186–193 (GRPNVGKS), 233–237 (DTAGL), and 298–301 (NKWD) contribute to the GTP site. In terms of domain architecture, KH-like spans 354-438 (RKMSTPVLTR…PMRIQMKSSH (85 aa)).

It belongs to the TRAFAC class TrmE-Era-EngA-EngB-Septin-like GTPase superfamily. EngA (Der) GTPase family. Associates with the 50S ribosomal subunit.

Its function is as follows. GTPase that plays an essential role in the late steps of ribosome biogenesis. The polypeptide is GTPase Der (Polaromonas sp. (strain JS666 / ATCC BAA-500)).